Reading from the N-terminus, the 149-residue chain is MSSNLRPLFWTLPLTRLTPAEWEALCDGCGKCCLNKLEYEDTGELEFTRVACRLLDGESCRCRNYEIRHQFVPECVRLTPKSLKKSVYWMPATCAYRLRYEGRPLEPWHYLISGDPETVHDAGQSVRGWTVSEAEVPEEDWQDYIIEDL.

The protein belongs to the UPF0260 family.

The protein is UPF0260 protein RCAP_rcc02083 of Rhodobacter capsulatus (strain ATCC BAA-309 / NBRC 16581 / SB1003).